The chain runs to 281 residues: GDT1-like protein 4 (281 aa).

Positions 1-22 (MARRVSTTRLLLLLLLVAAAAA) are cleaved as a signal peptide. The next 6 membrane-spanning stretches (helical) occupy residues 66–86 (AGLGLFDAFFASLSMILVSEI), 105–125 (TVLSGALSALVVMTILSTGLG), 137–157 (TNSAATVLYAFFGLRLLYIAW), 188–208 (IFSRFCTPIFLESFVLTFLAE), 226–246 (AVGVAVGATLGHTICTSFAVV), and 258–278 (GTVATIGGLLFLGFSLSSYFY).

Belongs to the GDT1 family.

Its subcellular location is the membrane. The polypeptide is GDT1-like protein 4 (Oryza sativa subsp. indica (Rice)).